The sequence spans 673 residues: Flotillin family inner membrane protein sll1021 (673 aa).

Residues L60–L80 traverse the membrane as a helical segment. A disordered region spans residues L639 to I673. Positions T664–I673 are enriched in polar residues.

It belongs to the band 7/mec-2 family. Flotillin subfamily. As to quaternary structure, homooligomerizes.

It localises to the cell inner membrane. It is found in the membrane raft. Functionally, found in functional membrane microdomains (FMM) that may be equivalent to eukaryotic membrane rafts. FMMs are highly dynamic and increase in number as cells age. Flotillins are thought to be important factors in membrane fluidity. The chain is Flotillin family inner membrane protein sll1021 from Synechocystis sp. (strain ATCC 27184 / PCC 6803 / Kazusa).